The primary structure comprises 906 residues: MLSILKKLFGTANDRTVKKLFSEITKINSLEPAIQKLSDEELKNKTVEFKEKLKNGATLDDIVYEAFAVVREAAKRVCGMRHFDVQLIGGLILHRGMITEMRTGEGKTLVATLPAYLNALTGKGVHVVTVNDYLARRDSASMGKIYNFLGLSVGCIVGGMPDEVKRAAYNADITHATNNELGFDYLRDNMKYSLQERVLRPFNFAIIDEVDSILIDEARTPLVISGPVNDNAELYGKIDKIVRLLNASDFEKDEKLKTINLTETGITHIESLLSKESIIKPDTSLYDFENLTLVHYVNQALRAHNMFTVNVDYLVREGKVMIIDEFTGRVMEGRRYSEGLHQALEAKENVKIQNENQTLASITFQNYFRNYPKLSGMTGTAMTEAPELKDIYNLDVVAVPTHNKVTRLDLDDEIYGSKKEKYDAILKLIRDCYDRGQPILVGTISIEKSEELSSVLNKEKIPHKVLNAKFHEQEAFIIAQAGRFKAVTIATNMAGRGTDIMLGGNPEMLIEQLDKAHNYEAKVAEIKAQIAEEKKQVIEAGGLFVIGTERHESRRIDNQLRGRSGRQGDPGKTKFFLSLDDDLMRIFASDRISGVLRTLGLKDGEAIHHPMISRSLEKAQQKVEGHNYEMRKNLLRFDDVMNDQRKIIYEQRTEIIKSKDSHGFLNSTTEELAQKIVLTFMPVGSYREDWDIENLSVELHRVFSIKFDHNVVSKNDVTEEEITKTVIQMAHDIYKSKEEAYSSELMHNAVKYILLTTLDQVWKDHLYSLDHLRQGISLRAYGQKDPLSEYKREAFNLFEQMLNNLKELFIQTVYHFHIDLKNVQKEDVSLEYKKLQKNMRESREDPAFSKYNAGSSIETDLKPVVSRIDPKDRNPDDPTSWGRVSRNELCPCGSGKKYKYCHGANE.

Residues Q86, 104-108, and D499 each bind ATP; that span reads GEGKT. Residues 862–886 are disordered; the sequence is KPVVSRIDPKDRNPDDPTSWGRVSR. Residues C890, C892, C901, and H902 each coordinate Zn(2+).

The protein belongs to the SecA family. As to quaternary structure, monomer and homodimer. Part of the essential Sec protein translocation apparatus which comprises SecA, SecYEG and auxiliary proteins SecDF-YajC and YidC. Zn(2+) is required as a cofactor.

It is found in the cell inner membrane. The protein resides in the cytoplasm. It catalyses the reaction ATP + H2O + cellular proteinSide 1 = ADP + phosphate + cellular proteinSide 2.. In terms of biological role, part of the Sec protein translocase complex. Interacts with the SecYEG preprotein conducting channel. Has a central role in coupling the hydrolysis of ATP to the transfer of proteins into and across the cell membrane, serving both as a receptor for the preprotein-SecB complex and as an ATP-driven molecular motor driving the stepwise translocation of polypeptide chains across the membrane. In Rickettsia africae (strain ESF-5), this protein is Protein translocase subunit SecA.